The following is a 181-amino-acid chain: Inner membrane-spanning protein YciB (181 aa).

A run of 5 helical transmembrane segments spans residues 3–23 (FLFD…YGIY), 49–69 (TMLW…LILQ), 76–96 (WKPS…QAIF), 119–139 (VNAS…YVAF), and 149–169 (FKLF…GLML).

It belongs to the YciB family.

It is found in the cell inner membrane. Plays a role in cell envelope biogenesis, maintenance of cell envelope integrity and membrane homeostasis. The polypeptide is Inner membrane-spanning protein YciB (Nitrosospira multiformis (strain ATCC 25196 / NCIMB 11849 / C 71)).